The primary structure comprises 326 residues: NADH-ubiquinone oxidoreductase chain 1 (326 aa).

The next 9 membrane-spanning stretches (helical) occupy residues methionine 1–valine 21, proline 41–valine 61, isoleucine 72–valine 92, isoleucine 104–threonine 124, isoleucine 152–valine 172, serine 177–alanine 197, tyrosine 234–phenylalanine 256, valine 268–phenylalanine 288, and isoleucine 303–asparagine 323.

Belongs to the complex I subunit 1 family.

Its subcellular location is the mitochondrion inner membrane. It carries out the reaction a ubiquinone + NADH + 5 H(+)(in) = a ubiquinol + NAD(+) + 4 H(+)(out). Its function is as follows. Core subunit of the mitochondrial membrane respiratory chain NADH dehydrogenase (Complex I) that is believed to belong to the minimal assembly required for catalysis. Complex I functions in the transfer of electrons from NADH to the respiratory chain. The immediate electron acceptor for the enzyme is believed to be ubiquinone. The chain is NADH-ubiquinone oxidoreductase chain 1 (ND1) from Chondrus crispus (Carrageen Irish moss).